The chain runs to 1306 residues: Contactin-associated protein-like 5 (1306 aa).

Positions 1–24 (MDSLPRLTSVLTLLFSGLWHLGLT) are cleaved as a signal peptide. Residues 25 to 1237 (ATNYNCDDPL…PLTNAVRSDS (1213 aa)) are Extracellular-facing. Residues 30-174 (CDDPLASLLS…IGMRVEVYGC (145 aa)) enclose the F5/8 type C domain. The cysteines at positions 30 and 174 are disulfide-linked. Laminin G-like domains follow at residues 180 to 360 (VADF…TFSC) and 367 to 544 (PITF…IDLC). Residues N282, N355, and N496 are each glycosylated (N-linked (GlcNAc...) asparagine). C329 and C360 are joined by a disulfide. 3 disulfides stabilise this stretch: C512-C544, C550-C561, and C555-C570. One can recognise an EGF-like 1 domain in the interval 546–583 (IKDRCLPNYCEHGGSCSQSWTTFYCNCSDTSYTGATCH). The N-linked (GlcNAc...) asparagine glycan is linked to N571. A disulfide bridge links C572 with C582. The Fibrinogen C-terminal domain maps to 584–790 (NSIYEQSCEV…LRCYGDRRFW (207 aa)). N-linked (GlcNAc...) asparagine glycosylation occurs at N622. The Laminin G-like 3 domain occupies 791 to 956 (NAVSFYTEAS…KVTSGVRPGC (166 aa)). Disulfide bonds link C929/C956, C960/C973, C967/C982, C984/C994, and C1164/C1199. Residues 957–995 (PGHCSSYGSICHNGGKCVEKHNGYLCDCTNSPYEGPFCK) form the EGF-like 2 domain. The 187-residue stretch at 1013–1199 (QEPYPVTKNI…VHGTLTESSC (187 aa)) folds into the Laminin G-like 4 domain. The helical transmembrane segment at 1238–1258 (AVIGGVIAVVIFIIFCIIGIM) threads the bilayer. Residues 1259 to 1306 (TRFLYQHKQSHRTSQMKEKEYPENLDSSFRNEIDLQNTVSECKREYFI) are Cytoplasmic-facing.

This sequence belongs to the neurexin family.

The protein resides in the membrane. May play a role in the correct development and proper functioning of the peripheral and central nervous system and be involved in cell adhesion and intercellular communication. The chain is Contactin-associated protein-like 5 (CNTNAP5) from Homo sapiens (Human).